The sequence spans 115 residues: NADH-ubiquinone oxidoreductase chain 3 (115 aa).

The next 3 membrane-spanning stretches (helical) occupy residues 3-23 (LIMTLFINITLTSLLVLIAFW), 55-75 (FFLVAITFLLFDLEIALLLPL), and 84-104 (LTTMLTTALLLISLLAVSLAY).

The protein belongs to the complex I subunit 3 family. As to quaternary structure, core subunit of respiratory chain NADH dehydrogenase (Complex I) which is composed of 45 different subunits. Interacts with TMEM186. Interacts with TMEM242.

The protein resides in the mitochondrion inner membrane. The enzyme catalyses a ubiquinone + NADH + 5 H(+)(in) = a ubiquinol + NAD(+) + 4 H(+)(out). Its function is as follows. Core subunit of the mitochondrial membrane respiratory chain NADH dehydrogenase (Complex I) which catalyzes electron transfer from NADH through the respiratory chain, using ubiquinone as an electron acceptor. Essential for the catalytic activity of complex I. The protein is NADH-ubiquinone oxidoreductase chain 3 of Ailurus fulgens (Himalayan red panda).